A 252-amino-acid polypeptide reads, in one-letter code: MKILISNDDGFQAPGIVALHDALKDIADVEVVAPEHNNSAKSNALTLAAPLYVHKAHNGFRYVTGTPADCVHIALKGLLGYRPDLVVSGINNGANMGDDTIYSGTVGAAMEAYLFGIPAIAFSQIEKGWAHVDAAAQVARRLVQQIERERMLDGGAFLLNVNVPNRPLQELKPIQVCRLGRRHSAEKVITQESPRGETMYWIAGAGGAKDSGEGTDFHATAAGHIALTPLQIDLTDHANLGQWRETVARLGN.

4 residues coordinate a divalent metal cation: Asp8, Asp9, Ser39, and Asn91.

The protein belongs to the SurE nucleotidase family. Requires a divalent metal cation as cofactor.

It is found in the cytoplasm. It carries out the reaction a ribonucleoside 5'-phosphate + H2O = a ribonucleoside + phosphate. Nucleotidase that shows phosphatase activity on nucleoside 5'-monophosphates. This is 5'-nucleotidase SurE from Variovorax paradoxus (strain S110).